Consider the following 85-residue polypeptide: Antibacterial factor-related peptide 1 (85 aa).

An N-terminal signal peptide occupies residues 1-19 (MLYFCLLLVLLLPNNGVSS).

Expressed in the pharynx and body wall muscle.

Its subcellular location is the secreted. This chain is Antibacterial factor-related peptide 1, found in Caenorhabditis elegans.